The chain runs to 93 residues: Cell division protein CrgA (93 aa).

2 consecutive transmembrane segments (helical) span residues 31–51 (VWFVALFIGLMLIGLVWLMVF) and 70–90 (LGPWNYAIAFAFMITGLLLTM).

The protein belongs to the CrgA family.

It is found in the cell membrane. Its function is as follows. Involved in cell division. In Mycobacterium avium (strain 104), this protein is Cell division protein CrgA.